Here is a 211-residue protein sequence, read N- to C-terminus: 3-demethoxyubiquinol 3-hydroxylase (211 aa).

A disordered region spans residues Lys22–Asp43. A compositionally biased stretch (polar residues) spans Asn28–Ser42. Residues Glu60, Glu90, His93, Glu142, Glu174, and His177 each contribute to the Fe cation site.

It belongs to the COQ7 family. Requires Fe cation as cofactor.

Its subcellular location is the cell membrane. It catalyses the reaction a 5-methoxy-2-methyl-3-(all-trans-polyprenyl)benzene-1,4-diol + AH2 + O2 = a 3-demethylubiquinol + A + H2O. It functions in the pathway cofactor biosynthesis; ubiquinone biosynthesis. Functionally, catalyzes the hydroxylation of 2-nonaprenyl-3-methyl-6-methoxy-1,4-benzoquinol during ubiquinone biosynthesis. The sequence is that of 3-demethoxyubiquinol 3-hydroxylase from Francisella philomiragia subsp. philomiragia (strain ATCC 25017 / CCUG 19701 / FSC 153 / O#319-036).